A 619-amino-acid chain; its full sequence is Thiohydroximate-O-sulfate sulfur/sulfate-lyase (nitrile-forming) NSP4 (619 aa).

2 consecutive Jacalin-type lectin domains span residues 2–142 (AQKV…YFAP) and 151–292 (AKKL…YISL). 5 Kelch repeats span residues 326–374 (KIYS…VCMV), 379–425 (TLYV…SMAA), 429–478 (NVYV…VVQG), 480–524 (VWVV…ASAA), and 528–583 (HIVI…GWTA). Arg-386 serves as the catalytic Proton donor. Positions 386, 419, 441, 470, and 519 each coordinate a (Z)-N-(sulfonatooxy)alkanimidothioate. Arg-441 functions as the Proton donor in the catalytic mechanism. The Fe(2+) site is built by Glu-535, Asp-539, and His-543. Trp-581 lines the a (Z)-N-(sulfonatooxy)alkanimidothioate pocket.

The protein belongs to the jacalin lectin family. Fe(2+) is required as a cofactor. As to expression, mainly expressed in roots, and, to a lower extent, in seedlings and leaves. Observed in seeds.

It carries out the reaction a (Z)-N-(sulfonatooxy)alkanimidothioate = a nitrile + sulfur + sulfate. The catalysed reaction is (Z)-phenyl-N-(sulfonatooxy)methanimidothioate = phenylacetonitrile + sulfur + sulfate. The enzyme catalyses (Z)-N-(sulfonatooxy)prop-2-enimidothioate = but-3-enenitrile + sulfur + sulfate. Functionally, specifier protein that contributes to constitutive and herbivore-induced simple nitrile formation. Promotes simple nitriles, but not epithionitrile or thiocyanate formation. Converts allylglucosinolate and benzylglucosinolate (glucotropaeolin) to their corresponding simple nitriles in the presence of myrosinase. The sequence is that of Thiohydroximate-O-sulfate sulfur/sulfate-lyase (nitrile-forming) NSP4 from Arabidopsis thaliana (Mouse-ear cress).